A 198-amino-acid polypeptide reads, in one-letter code: Protein GrpE (198 aa).

Residues 1–18 show a composition bias toward basic and acidic residues; the sequence is MSEQEQKVEIPEVEKQEE. The tract at residues 1–33 is disordered; sequence MSEQEQKVEIPEVEKQEEVVVEETQQAEHSQEF.

The protein belongs to the GrpE family. As to quaternary structure, homodimer.

It localises to the cytoplasm. In terms of biological role, participates actively in the response to hyperosmotic and heat shock by preventing the aggregation of stress-denatured proteins, in association with DnaK and GrpE. It is the nucleotide exchange factor for DnaK and may function as a thermosensor. Unfolded proteins bind initially to DnaJ; upon interaction with the DnaJ-bound protein, DnaK hydrolyzes its bound ATP, resulting in the formation of a stable complex. GrpE releases ADP from DnaK; ATP binding to DnaK triggers the release of the substrate protein, thus completing the reaction cycle. Several rounds of ATP-dependent interactions between DnaJ, DnaK and GrpE are required for fully efficient folding. This chain is Protein GrpE, found in Haemophilus influenzae (strain ATCC 51907 / DSM 11121 / KW20 / Rd).